A 921-amino-acid polypeptide reads, in one-letter code: Protein translocase subunit SecA (921 aa).

ATP-binding positions include Q86, 104–108 (GEGKT), and D512. Residues C905, C907, C916, and H917 each coordinate Zn(2+).

This sequence belongs to the SecA family. As to quaternary structure, monomer and homodimer. Part of the essential Sec protein translocation apparatus which comprises SecA, SecYEG and auxiliary proteins SecDF-YajC and YidC. Zn(2+) serves as cofactor.

It localises to the cell inner membrane. Its subcellular location is the cytoplasm. It catalyses the reaction ATP + H2O + cellular proteinSide 1 = ADP + phosphate + cellular proteinSide 2.. Its function is as follows. Part of the Sec protein translocase complex. Interacts with the SecYEG preprotein conducting channel. Has a central role in coupling the hydrolysis of ATP to the transfer of proteins into and across the cell membrane, serving both as a receptor for the preprotein-SecB complex and as an ATP-driven molecular motor driving the stepwise translocation of polypeptide chains across the membrane. The polypeptide is Protein translocase subunit SecA (Caulobacter sp. (strain K31)).